The sequence spans 580 residues: Glutamine--tRNA ligase (580 aa).

Positions 41-51 (PEPNGYLHIGH) match the 'HIGH' region motif. Residues 42 to 44 (EPN) and 48 to 54 (HIGHAKA) contribute to the ATP site. Aspartate 74 and tyrosine 218 together coordinate L-glutamine. Residues threonine 237, 285 to 286 (RL), and 293 to 295 (MSK) contribute to the ATP site. Residues 292 to 296 (VMSKR) carry the 'KMSKS' region motif.

This sequence belongs to the class-I aminoacyl-tRNA synthetase family. As to quaternary structure, monomer.

It is found in the cytoplasm. The enzyme catalyses tRNA(Gln) + L-glutamine + ATP = L-glutaminyl-tRNA(Gln) + AMP + diphosphate. The sequence is that of Glutamine--tRNA ligase from Xylella fastidiosa (strain M12).